The primary structure comprises 238 residues: Cysteine-rich venom protein pseudechetoxin-like (238 aa).

The signal sequence occupies residues 1–19 (MIAFIVLLSLAAVLQQSSG). Residues 20–28 (TVDFASESS) constitute a propeptide that is removed on maturation. The region spanning 38–164 (VDKHNALRRS…STKYLYVCQY (127 aa)) is the SCP domain. 8 disulfide bridges follow: Cys-75–Cys-153, Cys-92–Cys-165, Cys-148–Cys-162, Cys-184–Cys-191, Cys-187–Cys-196, Cys-200–Cys-233, Cys-209–Cys-227, and Cys-218–Cys-231. A ShKT domain is found at 200-233 (CKYEDDFSNCKALAKNSKCQTEWIKSKCPAACFC).

The protein belongs to the CRISP family. Expressed by the venom gland.

It localises to the secreted. Functionally, blocks olfactory (CNGA2) and retinal (CNGA1) CNG channel currents. Does not affect neither depolarization- nor caffeine-induced contraction of smooth muscle. The sequence is that of Cysteine-rich venom protein pseudechetoxin-like from Notechis scutatus scutatus (Mainland tiger snake).